We begin with the raw amino-acid sequence, 90 residues long: Evasin P1126 (90 aa).

The N-terminal stretch at 1-25 is a signal peptide; sequence MTSHSAVRIAIFAVIALHSIFECLS. 3 disulfides stabilise this stretch: C46-C62, C50-C64, and C58-C75. N-linked (GlcNAc...) asparagine glycosylation occurs at N55. A glycan (N-linked (GlcNAc...) asparagine) is linked at N77.

The protein localises to the secreted. Its function is as follows. Salivary chemokine-binding protein which binds to host chemokines CXCL1, CXCL2, CXCL3, CXCL4, CXCL5, CXCL6, CXCL7, CXCL10 and CXCL11. This is Evasin P1126 from Amblyomma cajennense (Cayenne tick).